We begin with the raw amino-acid sequence, 405 residues long: Prostaglandin E2 receptor EP1 subtype (405 aa).

The Extracellular segment spans residues 1–39; the sequence is MSPCGLNLSLADEAATCATPRLPNTSVVLPTGDNGTSPA. N-linked (GlcNAc...) asparagine glycans are attached at residues Asn-7, Asn-24, and Asn-34. The helical transmembrane segment at 40 to 62 threads the bilayer; that stretch reads LPIFSMTLGAVSNVLALALLAQV. Residues 63-80 are Cytoplasmic-facing; it reads AGRMRRRRSAATFLLFVA. A helical transmembrane segment spans residues 81 to 99; that stretch reads SLLAIDLAGHVIPGALVLR. At 100 to 113 the chain is on the extracellular side; the sequence is LYTAGRAPAGGACH. Cysteines 112 and 190 form a disulfide. A helical transmembrane segment spans residues 114–135; sequence FLGGCMVFFGLCPLLLGCGMAV. At 136 to 157 the chain is on the cytoplasmic side; that stretch reads ERCVGVTQPLIHAARVSVARAR. A helical membrane pass occupies residues 158 to 179; sequence LALAVLAAMALAVALLPLVHVG. Topologically, residues 180–202 are extracellular; the sequence is RYELQYPGTWCFISLGPRGGWRQ. Residues 203–228 form a helical membrane-spanning segment; the sequence is ALLAGLFAGLGLAALLAALVCNTLSG. Residues 229–301 are Cytoplasmic-facing; sequence LALLRARWRR…HAHDVEMVGQ (73 aa). Residues 243–287 form a disordered region; it reads RFRKTAGPDDRRRWGSRGPRLASASSASSITSATATLRSSRGGGS. The segment covering 262–282 has biased composition (low complexity); it reads RLASASSASSITSATATLRSS. Residues 302-323 traverse the membrane as a helical segment; sequence LVGIMVVSCICWSPLLVLVVLA. Residues 324–337 lie on the Extracellular side of the membrane; that stretch reads IGGWNSNSLQRPLF. A helical membrane pass occupies residues 338-357; the sequence is LAVRLASWNQILDPWVYILL. Residues 358-405 are Cytoplasmic-facing; that stretch reads RQAMLRQLLRLLPLRVSAKGGPTELGLTKSAWEASSLRSSRHSGFSHL.

Belongs to the G-protein coupled receptor 1 family. In terms of processing, phosphorylated. As to expression, abundant in kidney and in a lesser amount in lung.

It is found in the cell membrane. Its function is as follows. Receptor for prostaglandin E2 (PGE2). The activity of this receptor is mediated by G(q) proteins which activate a phosphatidylinositol-calcium second messenger system. May play a role as an important modulator of renal function. Implicated the smooth muscle contractile response to PGE2 in various tissues. In Mus musculus (Mouse), this protein is Prostaglandin E2 receptor EP1 subtype (Ptger1).